The sequence spans 326 residues: Centriolar satellite-associated tubulin polyglutamylase complex regulator 1 (326 aa).

A required for interaction with PCM1 region spans residues 1–111; sequence MLSPERLALP…HCLLQLLCPD (111 aa). The tract at residues 1–225 is required for interaction with TPGS1, LRRC49, and TTLL1; it reads MLSPERLALP…SCPPPALVKE (225 aa).

This sequence belongs to the CSTPP1 family. In terms of assembly, interacts with PCM1. Interacts with TTLL1, TPGS1, TPGS2 and LRRC49; the interactions link CSTPP1 to the complex TPGC. Binds to alpha-tubulin.

The protein localises to the cytoplasm. Its subcellular location is the cytoskeleton. It is found in the microtubule organizing center. It localises to the centrosome. The protein resides in the centriolar satellite. Functionally, regulator of the tubulin polyglutamylase complex (TPGC) that controls cytoskeletal organization, nuclear shape, and cilium disassembly by balancing microtubule and actin assembly. Regulates the assembly and stability of the TPGC and thereby modulates polyglutamylation of the microtubule, which antagonizes MAP4 binding. In Bos taurus (Bovine), this protein is Centriolar satellite-associated tubulin polyglutamylase complex regulator 1 (CSTPP1).